A 144-amino-acid polypeptide reads, in one-letter code: Transcription antitermination protein NusB (144 aa).

It belongs to the NusB family.

Involved in transcription antitermination. Required for transcription of ribosomal RNA (rRNA) genes. Binds specifically to the boxA antiterminator sequence of the ribosomal RNA (rrn) operons. The sequence is that of Transcription antitermination protein NusB from Paraburkholderia phytofirmans (strain DSM 17436 / LMG 22146 / PsJN) (Burkholderia phytofirmans).